The primary structure comprises 473 residues: Photosystem II CP43 reaction center protein (473 aa).

Residues 1–14 constitute a propeptide that is removed on maturation; it reads MKTLYSLRRFYHVE. Position 15 is an N-acetylthreonine (T15). Position 15 is a phosphothreonine (T15). 5 consecutive transmembrane segments (helical) span residues 69-93, 134-155, 178-200, 255-275, and 291-312; these read LFEVAHFVPEKPMYEQGLILLPHLA, LLGPETLEESFPFFGYVWKDRN, KALYFGGVYDTWAPGGGDVRKIT, KPFAWARRALVWSGEAYLSYS, and CFNNTAYPSEFYGPTGPEASQA. E367 contacts [CaMn4O5] cluster. Residues 447 to 471 form a helical membrane-spanning segment; the sequence is RARAAAAGFEKGIDRDFEPVLSMTP.

Belongs to the PsbB/PsbC family. PsbC subfamily. PSII is composed of 1 copy each of membrane proteins PsbA, PsbB, PsbC, PsbD, PsbE, PsbF, PsbH, PsbI, PsbJ, PsbK, PsbL, PsbM, PsbT, PsbX, PsbY, PsbZ, Psb30/Ycf12, at least 3 peripheral proteins of the oxygen-evolving complex and a large number of cofactors. It forms dimeric complexes. Binds multiple chlorophylls and provides some of the ligands for the Ca-4Mn-5O cluster of the oxygen-evolving complex. It may also provide a ligand for a Cl- that is required for oxygen evolution. PSII binds additional chlorophylls, carotenoids and specific lipids. serves as cofactor.

It localises to the plastid. The protein resides in the chloroplast thylakoid membrane. Its function is as follows. One of the components of the core complex of photosystem II (PSII). It binds chlorophyll and helps catalyze the primary light-induced photochemical processes of PSII. PSII is a light-driven water:plastoquinone oxidoreductase, using light energy to abstract electrons from H(2)O, generating O(2) and a proton gradient subsequently used for ATP formation. The sequence is that of Photosystem II CP43 reaction center protein from Jasminum nudiflorum (Winter jasmine).